The sequence spans 155 residues: Ribonuclease H (155 aa).

In terms of domain architecture, RNase H type-1 spans 1–146; the sequence is MPELFAYTDG…ADELARAGMK (146 aa). Residues Asp-9, Glu-52, Asp-74, and Asp-138 each contribute to the Mg(2+) site.

This sequence belongs to the RNase H family. In terms of assembly, monomer. It depends on Mg(2+) as a cofactor.

The protein resides in the cytoplasm. The enzyme catalyses Endonucleolytic cleavage to 5'-phosphomonoester.. Its function is as follows. Endonuclease that specifically degrades the RNA of RNA-DNA hybrids. This is Ribonuclease H from Ruegeria pomeroyi (strain ATCC 700808 / DSM 15171 / DSS-3) (Silicibacter pomeroyi).